The following is a 110-amino-acid chain: HIT-like protein CPn_0488/CP_0266/CPj0488/CpB0508 (110 aa).

Residues 3 to 110 enclose the HIT domain; it reads VFKQIIDGLI…LGGRPLGAIA (108 aa). The Histidine triad motif signature appears at 95-99; it reads HLHIH.

In Chlamydia pneumoniae (Chlamydophila pneumoniae), this protein is HIT-like protein CPn_0488/CP_0266/CPj0488/CpB0508.